Consider the following 293-residue polypeptide: Probable 2-(5''-triphosphoribosyl)-3'-dephosphocoenzyme-A synthase (293 aa).

Belongs to the CitG/MdcB family.

The catalysed reaction is 3'-dephospho-CoA + ATP = 2'-(5''-triphospho-alpha-D-ribosyl)-3'-dephospho-CoA + adenine. Involved in the formation of 2-(5''-phosphoribosyl)-3'-dephosphocoenzyme-A, the prosthetic group of the acyl-carrier protein of the malonate decarboxylase. The polypeptide is Probable 2-(5''-triphosphoribosyl)-3'-dephosphocoenzyme-A synthase (Pseudomonas aeruginosa (strain UCBPP-PA14)).